The chain runs to 182 residues: Protein GrpE (182 aa).

Positions 1-37 are disordered; that stretch reads MSDSSKERKKKFTGMVNKQKSEDQQNNSKQADDLDEL.

This sequence belongs to the GrpE family. As to quaternary structure, homodimer.

It localises to the cytoplasm. Its function is as follows. Participates actively in the response to hyperosmotic and heat shock by preventing the aggregation of stress-denatured proteins, in association with DnaK and GrpE. It is the nucleotide exchange factor for DnaK and may function as a thermosensor. Unfolded proteins bind initially to DnaJ; upon interaction with the DnaJ-bound protein, DnaK hydrolyzes its bound ATP, resulting in the formation of a stable complex. GrpE releases ADP from DnaK; ATP binding to DnaK triggers the release of the substrate protein, thus completing the reaction cycle. Several rounds of ATP-dependent interactions between DnaJ, DnaK and GrpE are required for fully efficient folding. This is Protein GrpE from Wolbachia sp. subsp. Brugia malayi (strain TRS).